A 100-amino-acid chain; its full sequence is Putative septation protein SpoVG (100 aa).

It belongs to the SpoVG family.

Functionally, could be involved in septation. The chain is Putative septation protein SpoVG from Clostridium novyi (strain NT).